The sequence spans 256 residues: ATP synthase peripheral stalk subunit b, mitochondrial (256 aa).

A mitochondrion-targeting transit peptide spans 1 to 42; the sequence is MLSRVVLSAAATAAPCLKNAAALGPGVLQATRAFHTGQPRLA. K131 is subject to N6-succinyllysine. N6-acetyllysine occurs at positions 139, 154, 162, 221, 225, 233, and 244.

This sequence belongs to the eukaryotic ATPase B chain family. Component of the ATP synthase complex composed at least of ATP5F1A/subunit alpha, ATP5F1B/subunit beta, ATP5MC1/subunit c (homooctomer), MT-ATP6/subunit a, MT-ATP8/subunit 8, ATP5ME/subunit e, ATP5MF/subunit f, ATP5MG/subunit g, ATP5MK/subunit k, ATP5MJ/subunit j, ATP5F1C/subunit gamma, ATP5F1D/subunit delta, ATP5F1E/subunit epsilon, ATP5PF/subunit F6, ATP5PB/subunit b, ATP5PD/subunit d, ATP5PO/subunit OSCP. ATP synthase complex consists of a soluble F(1) head domain (subunits alpha(3) and beta(3)) - the catalytic core - and a membrane F(0) domain - the membrane proton channel (subunits c, a, 8, e, f, g, k and j). These two domains are linked by a central stalk (subunits gamma, delta, and epsilon) rotating inside the F1 region and a stationary peripheral stalk (subunits F6, b, d, and OSCP).

The protein localises to the mitochondrion. The protein resides in the mitochondrion inner membrane. Functionally, subunit b, of the mitochondrial membrane ATP synthase complex (F(1)F(0) ATP synthase or Complex V) that produces ATP from ADP in the presence of a proton gradient across the membrane which is generated by electron transport complexes of the respiratory chain. ATP synthase complex consist of a soluble F(1) head domain - the catalytic core - and a membrane F(1) domain - the membrane proton channel. These two domains are linked by a central stalk rotating inside the F(1) region and a stationary peripheral stalk. During catalysis, ATP synthesis in the catalytic domain of F(1) is coupled via a rotary mechanism of the central stalk subunits to proton translocation. In vivo, can only synthesize ATP although its ATP hydrolase activity can be activated artificially in vitro. Part of the complex F(0) domain. Part of the complex F(0) domain and the peripheric stalk, which acts as a stator to hold the catalytic alpha(3)beta(3) subcomplex and subunit a/ATP6 static relative to the rotary elements. The sequence is that of ATP synthase peripheral stalk subunit b, mitochondrial from Mus musculus (Mouse).